The following is a 345-amino-acid chain: Myb/SANT-like DNA-binding domain-containing protein 4 (345 aa).

Positions 4–77 (LKRKRKSNFS…EVKRRYLDWR (74 aa)) constitute a Myb-like domain. Lys-9 is covalently cross-linked (Glycyl lysine isopeptide (Lys-Gly) (interchain with G-Cter in SUMO2)). The residue at position 106 (Ser-106) is a Phosphoserine. Glycyl lysine isopeptide (Lys-Gly) (interchain with G-Cter in SUMO2) cross-links involve residues Lys-114 and Lys-142. Residues 141-175 (VKVEEEERDPQSPEFEIEEEEEMLSSVIPDSRREN) form a disordered region. A Phosphothreonine modification is found at Thr-188. Residues 202-344 (HLLMNIEKQK…RLRIQKEGHL (143 aa)) adopt a coiled-coil conformation. Glycyl lysine isopeptide (Lys-Gly) (interchain with G-Cter in SUMO2) cross-links involve residues Lys-237, Lys-254, and Lys-273.

The polypeptide is Myb/SANT-like DNA-binding domain-containing protein 4 (Msantd4) (Rattus norvegicus (Rat)).